The primary structure comprises 329 residues: Fructose-1,6-bisphosphatase class 1 (329 aa).

4 residues coordinate Mg(2+): Glu-84, Asp-103, Leu-105, and Asp-106. Substrate contacts are provided by residues 106–109, Asn-196, and Lys-262; that span reads DGSS. Glu-268 serves as a coordination point for Mg(2+).

This sequence belongs to the FBPase class 1 family. In terms of assembly, homotetramer. Mg(2+) serves as cofactor.

The protein resides in the cytoplasm. The enzyme catalyses beta-D-fructose 1,6-bisphosphate + H2O = beta-D-fructose 6-phosphate + phosphate. Its pathway is carbohydrate biosynthesis; gluconeogenesis. The chain is Fructose-1,6-bisphosphatase class 1 from Shewanella woodyi (strain ATCC 51908 / MS32).